A 555-amino-acid chain; its full sequence is CTP synthase (555 aa).

The tract at residues 1-279 is amidoligase domain; sequence MATNRAKSST…DNYIIRRLNL (279 aa). Position 21 (Ser21) interacts with CTP. A UTP-binding site is contributed by Ser21. ATP-binding positions include 22–27 and Asp79; that span reads SLGKGL. Mg(2+) is bound by residues Asp79 and Glu153. CTP-binding positions include 160–162, 200–205, and Lys236; these read DIE and KTKPTQ. UTP is bound by residues 200 to 205 and Lys236; that span reads KTKPTQ. Residues 304–553 enclose the Glutamine amidotransferase type-1 domain; that stretch reads TIGIVGKYID…VDAALKHQAG (250 aa). Position 367 (Gly367) interacts with L-glutamine. Cys394 functions as the Nucleophile; for glutamine hydrolysis in the catalytic mechanism. Residues 395–398, Glu417, and Arg478 contribute to the L-glutamine site; that span reads LGLQ. Catalysis depends on residues His526 and Glu528.

Belongs to the CTP synthase family. Homotetramer.

It catalyses the reaction UTP + L-glutamine + ATP + H2O = CTP + L-glutamate + ADP + phosphate + 2 H(+). The enzyme catalyses L-glutamine + H2O = L-glutamate + NH4(+). It carries out the reaction UTP + NH4(+) + ATP = CTP + ADP + phosphate + 2 H(+). It functions in the pathway pyrimidine metabolism; CTP biosynthesis via de novo pathway; CTP from UDP: step 2/2. Allosterically activated by GTP, when glutamine is the substrate; GTP has no effect on the reaction when ammonia is the substrate. The allosteric effector GTP functions by stabilizing the protein conformation that binds the tetrahedral intermediate(s) formed during glutamine hydrolysis. Inhibited by the product CTP, via allosteric rather than competitive inhibition. Catalyzes the ATP-dependent amination of UTP to CTP with either L-glutamine or ammonia as the source of nitrogen. Regulates intracellular CTP levels through interactions with the four ribonucleotide triphosphates. The polypeptide is CTP synthase (Corynebacterium jeikeium (strain K411)).